Reading from the N-terminus, the 431-residue chain is Adenylosuccinate synthetase (431 aa).

GTP contacts are provided by residues 13–19 (GDEGKGK) and 41–43 (GHT). Catalysis depends on Asp-14, which acts as the Proton acceptor. Residues Asp-14 and Gly-41 each contribute to the Mg(2+) site. IMP-binding positions include 14–17 (DEGK), 39–42 (NAGH), Thr-130, Arg-144, Gln-225, Thr-240, and Arg-304. His-42 serves as the catalytic Proton donor. 300–306 (ATTGRKR) lines the substrate pocket. GTP is bound by residues Arg-306, 332–334 (KLD), and 415–417 (STG).

It belongs to the adenylosuccinate synthetase family. As to quaternary structure, homodimer. Requires Mg(2+) as cofactor.

The protein localises to the cytoplasm. It carries out the reaction IMP + L-aspartate + GTP = N(6)-(1,2-dicarboxyethyl)-AMP + GDP + phosphate + 2 H(+). The protein operates within purine metabolism; AMP biosynthesis via de novo pathway; AMP from IMP: step 1/2. In terms of biological role, plays an important role in the de novo pathway of purine nucleotide biosynthesis. Catalyzes the first committed step in the biosynthesis of AMP from IMP. This chain is Adenylosuccinate synthetase, found in Shewanella frigidimarina (strain NCIMB 400).